Here is a 273-residue protein sequence, read N- to C-terminus: Hydroxyethylthiazole kinase 2 (273 aa).

Substrate is bound at residue Met-45. ATP is bound by residues Lys-120 and Thr-173. Gly-200 contacts substrate.

It belongs to the Thz kinase family. Requires Mg(2+) as cofactor.

The catalysed reaction is 5-(2-hydroxyethyl)-4-methylthiazole + ATP = 4-methyl-5-(2-phosphooxyethyl)-thiazole + ADP + H(+). It functions in the pathway cofactor biosynthesis; thiamine diphosphate biosynthesis; 4-methyl-5-(2-phosphoethyl)-thiazole from 5-(2-hydroxyethyl)-4-methylthiazole: step 1/1. Its function is as follows. Catalyzes the phosphorylation of the hydroxyl group of 4-methyl-5-beta-hydroxyethylthiazole (THZ). The chain is Hydroxyethylthiazole kinase 2 from Leuconostoc mesenteroides subsp. mesenteroides (strain ATCC 8293 / DSM 20343 / BCRC 11652 / CCM 1803 / JCM 6124 / NCDO 523 / NBRC 100496 / NCIMB 8023 / NCTC 12954 / NRRL B-1118 / 37Y).